The primary structure comprises 421 residues: Methionine aminopeptidase 2 (421 aa).

The segment at 1-53 (MTDAEIENSPASDLKELNLENEGVEQQDQAKADESDPVESKKKKNKKKKKKKS) is disordered. Basic and acidic residues predominate over residues 28 to 40 (DQAKADESDPVES). Position 35 is a phosphoserine (serine 35). Basic residues predominate over residues 41–53 (KKKKNKKKKKKKS). Histidine 174 provides a ligand contact to substrate. Residues aspartate 194, aspartate 205, and histidine 274 each coordinate a divalent metal cation. Histidine 282 is a substrate binding site. Residues glutamate 307 and glutamate 402 each contribute to the a divalent metal cation site.

Belongs to the peptidase M24A family. Methionine aminopeptidase eukaryotic type 2 subfamily. It depends on Co(2+) as a cofactor. The cofactor is Zn(2+). Requires Mn(2+) as cofactor. Fe(2+) is required as a cofactor.

It localises to the cytoplasm. The enzyme catalyses Release of N-terminal amino acids, preferentially methionine, from peptides and arylamides.. Cotranslationally removes the N-terminal methionine from nascent proteins. The N-terminal methionine is often cleaved when the second residue in the primary sequence is small and uncharged (Met-Ala-, Cys, Gly, Pro, Ser, Thr, or Val). This is Methionine aminopeptidase 2 from Saccharomyces cerevisiae (strain RM11-1a) (Baker's yeast).